The chain runs to 424 residues: Phosphoribosylamine--glycine ligase (424 aa).

Residues 111-312 enclose the ATP-grasp domain; the sequence is KAFVKECGIK…LLDLCLATAK (202 aa). 137 to 189 contacts ATP; it reads IQNASFPLVIKALNKNTSIVYQEEEAIKILEDAFKQSNEPVIIEPFLEGFELS.

This sequence belongs to the GARS family.

It catalyses the reaction 5-phospho-beta-D-ribosylamine + glycine + ATP = N(1)-(5-phospho-beta-D-ribosyl)glycinamide + ADP + phosphate + H(+). It participates in purine metabolism; IMP biosynthesis via de novo pathway; N(1)-(5-phospho-D-ribosyl)glycinamide from 5-phospho-alpha-D-ribose 1-diphosphate: step 2/2. This Helicobacter pylori (strain ATCC 700392 / 26695) (Campylobacter pylori) protein is Phosphoribosylamine--glycine ligase (purD).